The following is a 66-amino-acid chain: Photosystem II reaction center protein J (66 aa).

Residues 36 to 56 (LWLVATAGGIAVIFVLGIFFY) form a helical membrane-spanning segment.

It belongs to the PsbJ family. In terms of assembly, PSII is composed of 1 copy each of membrane proteins PsbA, PsbB, PsbC, PsbD, PsbE, PsbF, PsbH, PsbI, PsbJ, PsbK, PsbL, PsbM, PsbT, PsbX, PsbY, Psb30/Ycf12, peripheral proteins PsbO, CyanoQ (PsbQ), PsbU, PsbV and a large number of cofactors. It forms dimeric complexes.

It localises to the cellular thylakoid membrane. In terms of biological role, one of the components of the core complex of photosystem II (PSII). PSII is a light-driven water:plastoquinone oxidoreductase that uses light energy to abstract electrons from H(2)O, generating O(2) and a proton gradient subsequently used for ATP formation. It consists of a core antenna complex that captures photons, and an electron transfer chain that converts photonic excitation into a charge separation. In Prochlorococcus marinus (strain MIT 9215), this protein is Photosystem II reaction center protein J.